The chain runs to 214 residues: tRNA (guanine-N(7)-)-methyltransferase (214 aa).

The S-adenosyl-L-methionine site is built by Glu-43, Glu-68, Asn-99, and Asp-121. Residue Asp-121 is part of the active site. Substrate contacts are provided by residues Lys-125, Asp-157, and 194–197 (TEYE).

The protein belongs to the class I-like SAM-binding methyltransferase superfamily. TrmB family.

The enzyme catalyses guanosine(46) in tRNA + S-adenosyl-L-methionine = N(7)-methylguanosine(46) in tRNA + S-adenosyl-L-homocysteine. The protein operates within tRNA modification; N(7)-methylguanine-tRNA biosynthesis. Catalyzes the formation of N(7)-methylguanine at position 46 (m7G46) in tRNA. In Alkaliphilus metalliredigens (strain QYMF), this protein is tRNA (guanine-N(7)-)-methyltransferase.